The primary structure comprises 188 residues: Elongation factor P (188 aa).

An N6-(3,6-diaminohexanoyl)-5-hydroxylysine modification is found at Lys34.

This sequence belongs to the elongation factor P family. Post-translationally, may be beta-lysylated on the epsilon-amino group of Lys-34 by the combined action of EpmA and EpmB, and then hydroxylated on the C5 position of the same residue by EpmC (if this protein is present). Lysylation is critical for the stimulatory effect of EF-P on peptide-bond formation. The lysylation moiety may extend toward the peptidyltransferase center and stabilize the terminal 3-CCA end of the tRNA. Hydroxylation of the C5 position on Lys-34 may allow additional potential stabilizing hydrogen-bond interactions with the P-tRNA.

Its subcellular location is the cytoplasm. The protein operates within protein biosynthesis; polypeptide chain elongation. In terms of biological role, involved in peptide bond synthesis. Alleviates ribosome stalling that occurs when 3 or more consecutive Pro residues or the sequence PPG is present in a protein, possibly by augmenting the peptidyl transferase activity of the ribosome. Modification of Lys-34 is required for alleviation. This Xanthomonas axonopodis pv. citri (strain 306) protein is Elongation factor P.